The following is a 129-amino-acid chain: Small ribosomal subunit protein uS11 (129 aa).

This sequence belongs to the universal ribosomal protein uS11 family. In terms of assembly, part of the 30S ribosomal subunit. Interacts with proteins S7 and S18. Binds to IF-3.

Functionally, located on the platform of the 30S subunit, it bridges several disparate RNA helices of the 16S rRNA. Forms part of the Shine-Dalgarno cleft in the 70S ribosome. This is Small ribosomal subunit protein uS11 from Azotobacter vinelandii (strain DJ / ATCC BAA-1303).